The sequence spans 331 residues: Glyceraldehyde-3-phosphate dehydrogenase (331 aa).

NAD(+) is bound by residues 12–13 (RI), Asp-34, Arg-78, and Thr-120. N6-acetyllysine is present on residues Lys-132 and Lys-138. Residues 149-151 (SCT) and Thr-180 each bind D-glyceraldehyde 3-phosphate. The active-site Nucleophile is the Cys-150. Position 192 is an N6-acetyllysine (Lys-192). D-glyceraldehyde 3-phosphate-binding positions include 209-210 (TG) and Arg-232. Lys-249 is modified (N6-acetyllysine). Asn-314 is an NAD(+) binding site.

This sequence belongs to the glyceraldehyde-3-phosphate dehydrogenase family. As to quaternary structure, homotetramer.

It localises to the cytoplasm. It catalyses the reaction D-glyceraldehyde 3-phosphate + phosphate + NAD(+) = (2R)-3-phospho-glyceroyl phosphate + NADH + H(+). The protein operates within carbohydrate degradation; glycolysis; pyruvate from D-glyceraldehyde 3-phosphate: step 1/5. Its function is as follows. Catalyzes the oxidative phosphorylation of glyceraldehyde 3-phosphate (G3P) to 1,3-bisphosphoglycerate (BPG) using the cofactor NAD. The first reaction step involves the formation of a hemiacetal intermediate between G3P and a cysteine residue, and this hemiacetal intermediate is then oxidized to a thioester, with concomitant reduction of NAD to NADH. The reduced NADH is then exchanged with the second NAD, and the thioester is attacked by a nucleophilic inorganic phosphate to produce BPG. The chain is Glyceraldehyde-3-phosphate dehydrogenase (gapA) from Escherichia coli O6:H1 (strain CFT073 / ATCC 700928 / UPEC).